Consider the following 654-residue polypeptide: NADPH-dependent diflavin oxidoreductase 1 (654 aa).

Low complexity predominate over residues 1-10 (MSGSQSSGSP). A disordered region spans residues 1-22 (MSGSQSSGSPGSPGPPGPPGRS). Residues 23–167 (ALVVYGSETG…TFIPWLAGFR (145 aa)) form the Flavodoxin-like domain. FMN-binding positions include 29–34 (SETGNA), 76–79 (STTG), and 114–123 (LGDSSYPKFN). Residues 235 to 485 (HDSLTATLVQ…QLQRGGLNSS (251 aa)) enclose the FAD-binding FR-type domain. Residues Arg-389, 419-422 (RQFS), and 458-461 (GVCT) contribute to the FAD site. Residues Thr-500, 568 to 569 (SR), and 574 to 578 (KVYVQ) contribute to the NADP(+) site. Position 654 (Trp-654) interacts with FAD.

This sequence belongs to the NADPH-dependent diflavin oxidoreductase NDOR1 family. In the N-terminal section; belongs to the flavodoxin family. The protein in the C-terminal section; belongs to the flavoprotein pyridine nucleotide cytochrome reductase family. As to quaternary structure, interacts with dre2; as part of the cytosolic iron-sulfur (Fe-S) protein assembly (CIA) machinery. FAD serves as cofactor. It depends on FMN as a cofactor.

The protein resides in the cytoplasm. Its subcellular location is the mitochondrion. The enzyme catalyses 2 oxidized [2Fe-2S]-[protein] + NADPH = 2 reduced [2Fe-2S]-[protein] + NADP(+) + H(+). Functionally, NADPH-dependent reductase which is a central component of the cytosolic iron-sulfur (Fe-S) protein assembly (CIA) machinery. Transfers electrons from NADPH via its FAD and FMN prosthetic groups to the [2Fe-2S] cluster of dre2, another key component of the CIA machinery. In turn, this reduced cluster provides electrons for assembly of cytosolic iron-sulfur cluster proteins. Positively controls H(2)O(2)-induced cell death. This is NADPH-dependent diflavin oxidoreductase 1 from Emericella nidulans (strain FGSC A4 / ATCC 38163 / CBS 112.46 / NRRL 194 / M139) (Aspergillus nidulans).